A 60-amino-acid polypeptide reads, in one-letter code: Metallothionein (60 aa).

A beta region spans residues 1 to 28 (MDPCECSKTGKCSCGGSCTCTNCSCTSC). C4, C6, C12, C14, C18, C20, C23, C25, C28, C32, C33, C35, C36, C40, C43, C47, C49, C54, C58, and C59 together coordinate a divalent metal cation. The segment at 29–60 (KKSCCPCCPSGCSKCASGCVCKGKTCDTSCCQ) is alpha.

This sequence belongs to the metallothionein superfamily. Type 1 family.

Metallothioneins have a high content of cysteine residues that bind various heavy metals. In Chelon auratus (Golden grey mullet), this protein is Metallothionein (mt).